Here is a 513-residue protein sequence, read N- to C-terminus: ATP synthase subunit alpha (513 aa).

ATP is bound at residue 169 to 176 (GDRQTGKT).

This sequence belongs to the ATPase alpha/beta chains family. As to quaternary structure, F-type ATPases have 2 components, CF(1) - the catalytic core - and CF(0) - the membrane proton channel. CF(1) has five subunits: alpha(3), beta(3), gamma(1), delta(1), epsilon(1). CF(0) has three main subunits: a(1), b(2) and c(9-12). The alpha and beta chains form an alternating ring which encloses part of the gamma chain. CF(1) is attached to CF(0) by a central stalk formed by the gamma and epsilon chains, while a peripheral stalk is formed by the delta and b chains.

The protein localises to the cell inner membrane. The catalysed reaction is ATP + H2O + 4 H(+)(in) = ADP + phosphate + 5 H(+)(out). In terms of biological role, produces ATP from ADP in the presence of a proton gradient across the membrane. The alpha chain is a regulatory subunit. The chain is ATP synthase subunit alpha from Enterobacter sp. (strain 638).